The sequence spans 385 residues: Aliphatic amidase expression-regulating protein (385 aa).

In terms of assembly, homodimer. Forms a complex with AmiR.

Its function is as follows. Negatively regulates the expression of the aliphatic amidase operon. AmiC functions by inhibiting the action of AmiR at the protein level. It exhibits protein kinase activity. This is Aliphatic amidase expression-regulating protein (amiC) from Pseudomonas aeruginosa (strain ATCC 15692 / DSM 22644 / CIP 104116 / JCM 14847 / LMG 12228 / 1C / PRS 101 / PAO1).